Here is a 353-residue protein sequence, read N- to C-terminus: MTVELMMSSYSGGGGGGDGFPAIAAAAKMEDTALREAASAGIHGVEEFLKLIGQSQQPTEKSQTEITAVTDVAVNSFKKVISLLGRSRTGHARFRRAPASTQTPFKQTPVVEEEVEVEEKKPETSSVLTKQKTEQYHGGGSAFRVYCPTPIHRRPPLSHNNNNNQNQTKNGSSSSSPPMLANGAPSTINFAPSPPVSATNSFMSSHRCDTDSTHMSSGFEFTNPSQLSGSRGKPPLSSASLKRRCNSSPSSRCHCSKKRKSRVKRVIRVPAVSSKMADIPSDEFSWRKYGQKPIKGSPHPRGYYKCSSVRGCPARKHVERALDDAMMLIVTYEGDHNHALVLETTTMNHDKTL.

The segment at 117–259 (VEEKKPETSS…SSRCHCSKKR (143 aa)) is disordered. Low complexity predominate over residues 158–176 (SHNNNNNQNQTKNGSSSSS). Polar residues-rich tracts occupy residues 184–204 (APST…SFMS) and 213–229 (THMS…QLSG). A DNA-binding region (WRKY) is located at residues 275 to 341 (KMADIPSDEF…YEGDHNHALV (67 aa)).

The protein belongs to the WRKY group II-d family. In young, mature and senescent leaves.

It is found in the nucleus. Transcription factor. Interacts specifically with the W box (5'-(T)TGAC[CT]-3'), a frequently occurring elicitor-responsive cis-acting element. The sequence is that of Probable WRKY transcription factor 7 (WRKY7) from Arabidopsis thaliana (Mouse-ear cress).